Reading from the N-terminus, the 182-residue chain is MKEIRIHGRGGQGSVTAAEMLSVAAFEDGKFSQAFPAFGVERRGAPVQAFTRINNNPIRLRSQVYTPDYVIVQDATLLETVDVASGVKDDGIIIVNTTENPESLKLNTKARVMTVDATKVAMDIIGVPIVNTVLLGAFAGATGEINVESIQHAIRARFSGKVGEKNANAIQKAYKLIRGEEA.

Heterotetramer of one alpha, one beta, one delta and one gamma chain.

It catalyses the reaction 2 oxidized [2Fe-2S]-[ferredoxin] + pyruvate + CoA = 2 reduced [2Fe-2S]-[ferredoxin] + acetyl-CoA + CO2 + H(+). The polypeptide is Pyruvate synthase subunit PorC (porC) (Methanosarcina barkeri (strain Fusaro / DSM 804)).